Here is a 127-residue protein sequence, read N- to C-terminus: MNFSKSLLLIAFGGAIGSIFRYLLQYWFGNVLGYSLPWGTLTANLLGSFLIGVVYAISDRFPLFDPQWKFLLASGFCGGFTTFSTFSYETFQMLKSGHYILFLGYICLSVVGGIGFAFAGVWMIKNF.

4 helical membrane passes run 8–28 (LLIAFGGAIGSIFRYLLQYWF), 37–57 (PWGTLTANLLGSFLIGVVYAI), 68–88 (WKFLLASGFCGGFTTFSTFSY), and 100–120 (ILFLGYICLSVVGGIGFAFAG). Na(+)-binding residues include Gly-78 and Thr-81.

The protein belongs to the fluoride channel Fluc/FEX (TC 1.A.43) family.

Its subcellular location is the cell inner membrane. The enzyme catalyses fluoride(in) = fluoride(out). With respect to regulation, na(+) is not transported, but it plays an essential structural role and its presence is essential for fluoride channel function. Fluoride-specific ion channel. Important for reducing fluoride concentration in the cell, thus reducing its toxicity. In Leptospira interrogans serogroup Icterohaemorrhagiae serovar copenhageni (strain Fiocruz L1-130), this protein is Fluoride-specific ion channel FluC.